Reading from the N-terminus, the 368-residue chain is Protein PXR1 (368 aa).

Residues 1–24 (MGLAGAKNKRKLGNDPNNTKWSRN) are disordered. A compositionally biased stretch (polar residues) spans 15–24 (DPNNTKWSRN). The G-patch domain occupies 25-79 (TDTFGQKILRAQGWQPGEYLGAKDAAHAEWHTEANTTHIRVTLKDDTLGLGAKRN). The disordered stretch occupies residues 144–337 (TPDEEAEEIP…GYSTPIPTGS (194 aa)). Over residues 176–186 (RRSDKEDDKLG) the composition is skewed to basic and acidic residues. 2 stretches are compositionally biased toward basic residues: residues 187–196 (KKEKKSKKRK) and 257–277 (DKKR…KKEK). Positions 310-337 (PSSAPTPTDSNSSTPTGSGYSTPIPTGS) are enriched in low complexity.

Belongs to the PINX1 family.

Its subcellular location is the nucleus. It is found in the nucleolus. Involved in rRNA-processing at A0, A1 and A2 sites and negatively regulates telomerase. The chain is Protein PXR1 (PXR1) from Chaetomium globosum (strain ATCC 6205 / CBS 148.51 / DSM 1962 / NBRC 6347 / NRRL 1970) (Soil fungus).